The sequence spans 158 residues: Phosphopantetheine adenylyltransferase (158 aa).

Thr-10 lines the substrate pocket. Residues 10 to 11 (TF) and His-18 each bind ATP. Substrate-binding residues include Lys-42, Leu-74, and Arg-88. ATP contacts are provided by residues 89-91 (GIR), Glu-99, and 124-130 (WRYLSST).

This sequence belongs to the bacterial CoaD family. In terms of assembly, homohexamer. It depends on Mg(2+) as a cofactor.

Its subcellular location is the cytoplasm. The enzyme catalyses (R)-4'-phosphopantetheine + ATP + H(+) = 3'-dephospho-CoA + diphosphate. The protein operates within cofactor biosynthesis; coenzyme A biosynthesis; CoA from (R)-pantothenate: step 4/5. Reversibly transfers an adenylyl group from ATP to 4'-phosphopantetheine, yielding dephospho-CoA (dPCoA) and pyrophosphate. This is Phosphopantetheine adenylyltransferase from Actinobacillus pleuropneumoniae serotype 7 (strain AP76).